The chain runs to 212 residues: Ion-translocating oxidoreductase complex subunit G (212 aa).

The chain crosses the membrane as a helical span at residues 9 to 29 (ASLLGLFALLCTALVALVNQF). Thr176 is subject to FMN phosphoryl threonine.

The protein belongs to the RnfG family. As to quaternary structure, the complex is composed of six subunits: RnfA, RnfB, RnfC, RnfD, RnfE and RnfG. It depends on FMN as a cofactor.

Its subcellular location is the cell inner membrane. Part of a membrane-bound complex that couples electron transfer with translocation of ions across the membrane. This chain is Ion-translocating oxidoreductase complex subunit G, found in Shewanella loihica (strain ATCC BAA-1088 / PV-4).